The sequence spans 511 residues: Putative thymidine phosphorylase (511 aa).

The protein belongs to the thymidine/pyrimidine-nucleoside phosphorylase family. Type 2 subfamily.

It carries out the reaction thymidine + phosphate = 2-deoxy-alpha-D-ribose 1-phosphate + thymine. The polypeptide is Putative thymidine phosphorylase (Bradyrhizobium sp. (strain BTAi1 / ATCC BAA-1182)).